The sequence spans 337 residues: Methionine import ATP-binding protein MetN (337 aa).

Residues 4–240 (IKNLEITYPG…PWHPITKEFV (237 aa)) form the ABC transporter domain. 37–44 (GLSGAGKS) provides a ligand contact to ATP.

The protein belongs to the ABC transporter superfamily. Methionine importer (TC 3.A.1.24) family. The complex is composed of two ATP-binding proteins (MetN), two transmembrane proteins (MetI) and a solute-binding protein (MetQ).

It localises to the cell membrane. The catalysed reaction is L-methionine(out) + ATP + H2O = L-methionine(in) + ADP + phosphate + H(+). It carries out the reaction D-methionine(out) + ATP + H2O = D-methionine(in) + ADP + phosphate + H(+). Its function is as follows. Part of the ABC transporter complex MetNIQ involved in methionine import. Responsible for energy coupling to the transport system. The sequence is that of Methionine import ATP-binding protein MetN from Carboxydothermus hydrogenoformans (strain ATCC BAA-161 / DSM 6008 / Z-2901).